Reading from the N-terminus, the 43-residue chain is Disintegrin CV (43 aa).

4 disulfides stabilise this stretch: C1–C10, C6–C29, C7–C34, and C19–C36. Positions 1–43 (CTTGPCCRQCKLKPAGTTCWRTSVSSHYCTGRSCECPSYPGNG) constitute a Disintegrin domain. Positions 21 to 23 (RTS) match the Cell attachment site; atypical (RTS) motif.

The protein belongs to the disintegrin family. Short disintegrin subfamily. Monomer. Expressed by the venom gland.

Its subcellular location is the secreted. Functionally, specifically interacts with the alpha-1/beta-1 integrin (ITGA1/ITGB1). Exhibits highly inhibitory effects on cell adhesion and cell migration to collagens I and IV. Also shows in vivo anti-angiogenic activity. The chain is Disintegrin CV from Cerastes vipera (Sahara sand viper).